The following is a 98-amino-acid chain: MLEQQPTQNPLTVTMLNAQAQQVNKPLRDNVKAALKNYLSQLNGEDPTELYELVLSEIEHPMLDMVMQYTRGNQTRAATMLGINRGTLRKKLKKYGMG.

A DNA-binding region (H-T-H motif) is located at residues glutamine 74–lysine 93.

It belongs to the transcriptional regulatory Fis family. As to quaternary structure, homodimer.

In terms of biological role, activates ribosomal RNA transcription. Plays a direct role in upstream activation of rRNA promoters. The sequence is that of DNA-binding protein Fis from Mannheimia haemolytica (Pasteurella haemolytica).